The following is a 210-amino-acid chain: Dephospho-CoA kinase (210 aa).

In terms of domain architecture, DPCK spans 4–202; the sequence is WVGLTGGIGS…AFYSGIFASK (199 aa). 12-17 is an ATP binding site; sequence GSGKSA.

Belongs to the CoaE family.

The protein localises to the cytoplasm. The enzyme catalyses 3'-dephospho-CoA + ATP = ADP + CoA + H(+). Its pathway is cofactor biosynthesis; coenzyme A biosynthesis; CoA from (R)-pantothenate: step 5/5. In terms of biological role, catalyzes the phosphorylation of the 3'-hydroxyl group of dephosphocoenzyme A to form coenzyme A. The polypeptide is Dephospho-CoA kinase (Neisseria meningitidis serogroup A / serotype 4A (strain DSM 15465 / Z2491)).